A 452-amino-acid polypeptide reads, in one-letter code: Na(+)/H(+) antiporter NhaA (452 aa).

11 helical membrane passes run 23–43 (MMLF…LSTI), 71–91 (LLQF…GLEI), 108–128 (LPIV…LLVV), 136–156 (GAAI…AVLG), 165–185 (VFLT…IALF), 189–209 (HINI…YLMG), 216–236 (LGLY…SGIH), 316–336 (IVGY…TLGG), 349–369 (VFLG…YGFV), 385–405 (LMAV…IATL), and 418–438 (EAKL…IVTL).

The protein belongs to the NhaA Na(+)/H(+) (TC 2.A.33) antiporter family.

The protein resides in the cell inner membrane. The enzyme catalyses Na(+)(in) + 2 H(+)(out) = Na(+)(out) + 2 H(+)(in). Na(+)/H(+) antiporter that extrudes sodium in exchange for external protons. The polypeptide is Na(+)/H(+) antiporter NhaA (Porphyromonas gingivalis (strain ATCC BAA-308 / W83)).